We begin with the raw amino-acid sequence, 274 residues long: Protein RecA (274 aa).

43-50 (GPESSGKT) provides a ligand contact to ATP.

It belongs to the RecA family.

It is found in the cytoplasm. Can catalyze the hydrolysis of ATP in the presence of single-stranded DNA, the ATP-dependent uptake of single-stranded DNA by duplex DNA, and the ATP-dependent hybridization of homologous single-stranded DNAs. It interacts with LexA causing its activation and leading to its autocatalytic cleavage. The polypeptide is Protein RecA (Neisseria pharyngis).